We begin with the raw amino-acid sequence, 423 residues long: ATP-dependent Clp protease ATP-binding subunit ClpX (423 aa).

Residues 1–50 (MTDDTEYRCSFCGKEHHQVDDLIAGPDVRICSECVVLSCEIVEDRRNEAL) form the ClpX-type ZB domain. The Zn(2+) site is built by cysteine 9, cysteine 12, cysteine 31, and cysteine 34. Residue 126–133 (PTGCGKTY) participates in ATP binding.

It belongs to the ClpX chaperone family. As to quaternary structure, component of the ClpX-ClpP complex. Forms a hexameric ring that, in the presence of ATP, binds to fourteen ClpP subunits assembled into a disk-like structure with a central cavity, resembling the structure of eukaryotic proteasomes.

ATP-dependent specificity component of the Clp protease. It directs the protease to specific substrates. Can perform chaperone functions in the absence of ClpP. In Tropheryma whipplei (strain TW08/27) (Whipple's bacillus), this protein is ATP-dependent Clp protease ATP-binding subunit ClpX.